A 902-amino-acid polypeptide reads, in one-letter code: Glycogen phosphorylase (902 aa).

A disordered region spans residues 1–21 (MPPASTSTTNDMITEEPTSPH). Thr-31 carries the post-translational modification Phosphothreonine. Ser-333 bears the Phosphoserine mark. At Lys-751 the chain carries N6-(pyridoxal phosphate)lysine.

It belongs to the glycogen phosphorylase family. Homodimer. Requires pyridoxal 5'-phosphate as cofactor.

Its subcellular location is the cytoplasm. The protein localises to the cytosol. The enzyme catalyses [(1-&gt;4)-alpha-D-glucosyl](n) + phosphate = [(1-&gt;4)-alpha-D-glucosyl](n-1) + alpha-D-glucose 1-phosphate. Activated by phosphorylation of Thr-31. Phosphorylase is an important allosteric enzyme in carbohydrate metabolism. Enzymes from different sources differ in their regulatory mechanisms and in their natural substrates. However, all known phosphorylases share catalytic and structural properties. This Saccharomyces cerevisiae (strain ATCC 204508 / S288c) (Baker's yeast) protein is Glycogen phosphorylase (GPH1).